The following is a 492-amino-acid chain: ATP synthase subunit beta, chloroplastic (492 aa).

Residue 170-177 participates in ATP binding; it reads GGAGVGKT.

The protein belongs to the ATPase alpha/beta chains family. As to quaternary structure, F-type ATPases have 2 components, CF(1) - the catalytic core - and CF(0) - the membrane proton channel. CF(1) has five subunits: alpha(3), beta(3), gamma(1), delta(1), epsilon(1). CF(0) has four main subunits: a(1), b(1), b'(1) and c(9-12).

The protein localises to the plastid. It localises to the chloroplast thylakoid membrane. The enzyme catalyses ATP + H2O + 4 H(+)(in) = ADP + phosphate + 5 H(+)(out). Produces ATP from ADP in the presence of a proton gradient across the membrane. The catalytic sites are hosted primarily by the beta subunits. This is ATP synthase subunit beta, chloroplastic from Angiopteris lygodiifolia (Turnip fern).